The following is a 148-amino-acid chain: SsrA-binding protein (148 aa).

Belongs to the SmpB family.

Its subcellular location is the cytoplasm. Its function is as follows. Required for rescue of stalled ribosomes mediated by trans-translation. Binds to transfer-messenger RNA (tmRNA), required for stable association of tmRNA with ribosomes. tmRNA and SmpB together mimic tRNA shape, replacing the anticodon stem-loop with SmpB. tmRNA is encoded by the ssrA gene; the 2 termini fold to resemble tRNA(Ala) and it encodes a 'tag peptide', a short internal open reading frame. During trans-translation Ala-aminoacylated tmRNA acts like a tRNA, entering the A-site of stalled ribosomes, displacing the stalled mRNA. The ribosome then switches to translate the ORF on the tmRNA; the nascent peptide is terminated with the 'tag peptide' encoded by the tmRNA and targeted for degradation. The ribosome is freed to recommence translation, which seems to be the essential function of trans-translation. This is SsrA-binding protein from Burkholderia ambifaria (strain ATCC BAA-244 / DSM 16087 / CCUG 44356 / LMG 19182 / AMMD) (Burkholderia cepacia (strain AMMD)).